The sequence spans 263 residues: Tryptophan 2,3-dioxygenase (263 aa).

Residues 32–36, Y94, and R98 contribute to the substrate site; that span reads FIIVH. H221 provides a ligand contact to heme. A substrate-binding site is contributed by T235.

It belongs to the tryptophan 2,3-dioxygenase family. As to quaternary structure, homotetramer. Heme is required as a cofactor.

The enzyme catalyses L-tryptophan + O2 = N-formyl-L-kynurenine. It participates in amino-acid degradation; L-tryptophan degradation via kynurenine pathway; L-kynurenine from L-tryptophan: step 1/2. Its function is as follows. Heme-dependent dioxygenase that catalyzes the oxidative cleavage of the L-tryptophan (L-Trp) pyrrole ring and converts L-tryptophan to N-formyl-L-kynurenine. Catalyzes the oxidative cleavage of the indole moiety. This chain is Tryptophan 2,3-dioxygenase, found in Erythrobacter litoralis (strain HTCC2594).